A 213-amino-acid polypeptide reads, in one-letter code: Uridine kinase (213 aa).

An ATP-binding site is contributed by 14-21 (GASASGKS).

The protein belongs to the uridine kinase family.

Its subcellular location is the cytoplasm. It carries out the reaction uridine + ATP = UMP + ADP + H(+). The enzyme catalyses cytidine + ATP = CMP + ADP + H(+). Its pathway is pyrimidine metabolism; CTP biosynthesis via salvage pathway; CTP from cytidine: step 1/3. The protein operates within pyrimidine metabolism; UMP biosynthesis via salvage pathway; UMP from uridine: step 1/1. This Vibrio vulnificus (strain CMCP6) protein is Uridine kinase.